The primary structure comprises 156 residues: Lipoprotein signal peptidase (156 aa).

The next 3 membrane-spanning stretches (helical) occupy residues 5 to 25 (FKFIFYFWGAFVLVFALDQWV), 64 to 84 (YLHLALIVVLFIYLFWQKTLL), and 89 to 109 (IAFGMMLGAGVSNLLDRFIHG). Active-site residues include D113 and D130. Residues 122–142 (NFAIFNVADVMINISVALILI) traverse the membrane as a helical segment.

The protein belongs to the peptidase A8 family.

It localises to the cell inner membrane. The catalysed reaction is Release of signal peptides from bacterial membrane prolipoproteins. Hydrolyzes -Xaa-Yaa-Zaa-|-(S,diacylglyceryl)Cys-, in which Xaa is hydrophobic (preferably Leu), and Yaa (Ala or Ser) and Zaa (Gly or Ala) have small, neutral side chains.. The protein operates within protein modification; lipoprotein biosynthesis (signal peptide cleavage). Functionally, this protein specifically catalyzes the removal of signal peptides from prolipoproteins. This is Lipoprotein signal peptidase from Campylobacter jejuni subsp. jejuni serotype O:23/36 (strain 81-176).